The chain runs to 276 residues: Large ribosomal subunit protein uL2 (276 aa).

2 disordered regions span residues 14–58 (RNAS…GGGH) and 219–276 (PITR…KNRK). Residues 16–27 (ASVSDFSELTRS) show a composition bias toward polar residues. A compositionally biased stretch (basic residues) spans 255-276 (RRPKKASNKMIVRRRPSGKNRK).

It belongs to the universal ribosomal protein uL2 family. In terms of assembly, part of the 50S ribosomal subunit. Forms a bridge to the 30S subunit in the 70S ribosome.

In terms of biological role, one of the primary rRNA binding proteins. Required for association of the 30S and 50S subunits to form the 70S ribosome, for tRNA binding and peptide bond formation. It has been suggested to have peptidyltransferase activity; this is somewhat controversial. Makes several contacts with the 16S rRNA in the 70S ribosome. The protein is Large ribosomal subunit protein uL2 of Bifidobacterium longum (strain DJO10A).